A 366-amino-acid chain; its full sequence is GTP cyclohydrolase 1 type 2 homolog (366 aa).

Zn(2+)-binding residues include histidine 64, histidine 65, aspartate 102, histidine 326, and glutamate 329.

It belongs to the GTP cyclohydrolase I type 2/NIF3 family. Toroid-shaped homohexamer that has a central cavity of about 38 Angstroms diameter.

The protein is GTP cyclohydrolase 1 type 2 homolog of Staphylococcus aureus (strain Mu50 / ATCC 700699).